Reading from the N-terminus, the 524-residue chain is Sterol O-acyltransferase 2 (524 aa).

A disordered region spans residues 1 to 31 (MEPKAPQLRRRERQGEEQENGACGEGNTRTH). The Cytoplasmic segment spans residues 1 to 118 (MEPKAPQLRR…LDELMGVQHF (118 aa)). Histidine 117 contributes to the cholesterol binding site. The helical transmembrane segment at 119–140 (RTIYHMFIAGLCVLIISTLAID) threads the bilayer. The Lumenal portion of the chain corresponds to 141–160 (FIDEGRLMLEFDLLLFSFGQ). The helical transmembrane segment at 161 to 186 (LPLALMMWVPMFLSTLLLPYQTLRLW) threads the bilayer. Residues 187 to 198 (ARPRSGGAWTLG) lie on the Cytoplasmic side of the membrane. The chain crosses the membrane as a helical span at residues 199–222 (ASLGCVLLAAHAAVLCVLPVHVSV). Residues 223 to 230 (KHELPPAS) lie on the Lumenal side of the membrane. A helical transmembrane segment spans residues 231-254 (RCVLVFEQVRFLMKSYSFLRETVP). Over 255-295 (GIFCVRGGKGICTPSFSSYLYFLFCPTLIYRETYPRTPSIR) the chain is Cytoplasmic. At cysteine 279 the chain carries Cysteine sulfenic acid (-SOH); alternate. A Glycyl cysteine thioester (Cys-Gly) (interchain with G-Cter in ubiquitin); alternate cross-link involves residue cysteine 279. The helical transmembrane segment at 296–328 (WNYVAKNFAQALGCLLYACFILGRLCVPVFANM) threads the bilayer. The Lumenal portion of the chain corresponds to 329–345 (SREPFSTRALLLSILHA). A helical membrane pass occupies residues 346 to 371 (TGPGIFMLLLIFFAFLHCWLNAFAEM). Over 372–419 (LRFGDRMFYRDWWNSTSFSNYYRTWNVVVHDWLYSYVYQDGLWLLGRQ) the chain is Cytoplasmic. An FYXDWWN motif motif is present at residues 379 to 385 (FYRDWWN). 6 residues coordinate an acyl-CoA: asparagine 391, arginine 394, asparagine 397, histidine 401, tyrosine 409, and serine 432. A helical membrane pass occupies residues 420–444 (GRGAAMLGVFLVSALVHEYIFCFVL). Residue histidine 436 is part of the active site. Over 445 to 450 (GFFYPV) the chain is Lumenal. The helical transmembrane segment at 451–466 (MLILFLVVGGLLNFTM) threads the bilayer. The Cytoplasmic portion of the chain corresponds to 467-472 (NDRHTG). Residues 473-504 (PAWNILMWTFLFLGQGIQVSLYCQEWYARRHC) traverse the membrane as a helical segment. At 505 to 524 (PLPQPTFWELVTPRSWSCHP) the chain is on the lumenal side.

Belongs to the membrane-bound acyltransferase family. Sterol o-acyltransferase subfamily. In terms of assembly, may form homo- or heterodimers. Interacts with INSIG1; the interaction is direct and promotes association with AMFR/gp78. Post-translationally, polyubiquitinated by AMFR/gp78 at Cys-279, leading to its degradation when the lipid levels are low. Association with AMFR/gp78 is mediated via interaction with INSIG1. High concentration of cholesterol and fatty acid results in Cys-279 oxidation, preventing ubiquitination at the same site, resulting in protein stabilization. In terms of processing, oxidized at Cys-279: high concentration of cholesterol and fatty acid induce reactive oxygen species, which oxidizes Cys-279, preventing ubiquitination at the same site, and resulting in protein stabilization.

The protein localises to the endoplasmic reticulum membrane. The catalysed reaction is a sterol + a long-chain fatty acyl-CoA = a long-chain 3-hydroxysterol ester + CoA. It catalyses the reaction cholesterol + an acyl-CoA = a cholesterol ester + CoA. The enzyme catalyses cholesterol + (9Z)-octadecenoyl-CoA = cholesteryl (9Z-octadecenoate) + CoA. It carries out the reaction (5Z,8Z,11Z,14Z,17Z)-eicosapentaenoyl-CoA + cholesterol = (5Z,8Z,11Z,14Z,17Z-eicosapentaenoyl)-cholesterol + CoA. The catalysed reaction is (9Z,12Z,15Z)-octadecatrienoyl-CoA + cholesterol = (9Z,12Z,15Z-octadecatrienoyl)-cholesterol + CoA. It catalyses the reaction (5Z,8Z,11Z,14Z)-eicosatetraenoyl-CoA + cholesterol = cholesteryl (5Z,8Z,11Z,14Z)-eicosatetraenoate + CoA. Its function is as follows. Catalyzes the formation of fatty acid-cholesterol esters, which are less soluble in membranes than cholesterol. Plays a role in lipoprotein assembly and dietary cholesterol absorption. Utilizes oleoyl-CoA ((9Z)-octadecenoyl-CoA) and linolenoyl-CoA ((9Z,12Z,15Z)-octadecatrienoyl-CoA) as substrates. May provide cholesteryl esters for lipoprotein secretion from hepatocytes and intestinal mucosa. In Rattus norvegicus (Rat), this protein is Sterol O-acyltransferase 2.